The primary structure comprises 351 residues: Fruit bromelain (351 aa).

A signal peptide spans 1 to 24 (MASKVQLVFLFLFLCAMWASPSAA). A propeptide spans 25-121 (SRDEPNDPMM…VVSFDDVNIS (97 aa)) (activation peptide). Asn119 is a glycosylation site (N-linked (GlcNAc...) asparagine). Cystine bridges form between Cys144–Cys184, Cys178–Cys217, and Cys273–Cys325. Residue Cys147 is part of the active site. Active-site residues include His279 and Asn300.

This sequence belongs to the peptidase C1 family.

It carries out the reaction Hydrolysis of proteins with broad specificity for peptide bonds. Bz-Phe-Val-Arg-|-NHMec is a good synthetic substrate, but there is no action on Z-Arg-Arg-|-NHMec (cf. stem bromelain).. In terms of biological role, cysteine proteinase with a high level of diversity in substrate specificity. The protein is Fruit bromelain of Ananas comosus (Pineapple).